Consider the following 405-residue polypeptide: MPFTKMCTSKLANPLMKYYLNLNGKSPLSKLSNSLNSSSFKFISCSPHIVCRELNTVSGVAIRPQTITKDDKRDFMAVFPDIVRDLTQLNPGISDLSTLISKLMQYNVSGGKKVRGLTVVYSYRMLAPDHALTPENIRLAQILGWCVEMLQGFFVVIDDLADQSVTRRGRPCWYRLPGVGLRASSDALLIQSGCFQLLQQHCKDKEFYVDLVELFLDALRRTTYGQTLDYVSSFPNINHLTMDRYNFITKYKTAYYTYHLPVATAMYMAGIYNAELHRQAKSVLLEMGHYFQVQDDYLDVFGDEEMIGKKGTDIQEGKCTWLAIIAFQRASPPQREVLESCYGTKEPEKIKKVKDIFIELSLPAVYHAYEEETYNLITRQIQQLSQGLPHELFLTLLHKLYGRKQ.

Mg(2+) is bound by residues Asp158 and Asp162. A DDXXD motif motif is present at residues 158-162; it reads DDLAD.

Belongs to the FPP/GGPP synthase family. The cofactor is Mg(2+).

It carries out the reaction isopentenyl diphosphate + (2E)-geranyl diphosphate = (2E,6E)-farnesyl diphosphate + diphosphate. Its pathway is pheromone biosynthesis. Farnesyl pyrophosphate synthase involved in murgantiol biosynthesis, a male-released aggregation pheromone, by catalyzing the formation of (2E,6E)-farnesyl diphosphate. The chain is Farnesyl pyrophosphate synthase from Murgantia histrionica (Harlequin bug).